Consider the following 359-residue polypeptide: MTYIPRQWIQVVDSHTGGEPTRLIYDGQHWPFAGSREGALTSQESPSPSVLSGLRKAIDRSSLILPKTMSERRQFLETEADWLRTASLLEPRGSDVLVGAILTPPEHASSQAGVVFCNNTGYLGMCGHGMIGVIVSLGQMGLIAPGPVTIDTPVGSIAATWSGSASVTLTNVWSYRYRHAVSLSVPGLGVVTGDIAWGGNWFFLIGEEVHQKSLDLGNLSDLLAYTSQIRSELGRQGIAGAQGAEIDHVELFASCDSSIADSQNFVLCPGGAYDRSPCGTGTSAKLACLVADGKVAEGGLWRQKSIVGSCFQAKALSIREGERGLEVLPQLTGEAYVTGVSTLQIDEADPFRWGILPPQ.

The Proton acceptor role is filled by Cys126. Residues 127–128, His248, and Asp274 each bind substrate; that span reads GH. The Proton donor role is filled by Cys278. Residue 279–280 participates in substrate binding; it reads GT.

The protein belongs to the proline racemase family.

It catalyses the reaction trans-4-hydroxy-L-proline = cis-4-hydroxy-D-proline. In terms of biological role, catalyzes the epimerization of trans-4-hydroxy-L-proline (t4LHyp) to cis-4-hydroxy-D-proline (c4DHyp). Is likely involved in a degradation pathway that converts t4LHyp to alpha-ketoglutarate. Displays no proline racemase activity. The protein is 4-hydroxyproline 2-epimerase of Planctopirus limnophila (strain ATCC 43296 / DSM 3776 / IFAM 1008 / Mu 290) (Planctomyces limnophilus).